Here is a 94-residue protein sequence, read N- to C-terminus: Large ribosomal subunit protein eL42 (94 aa).

Zn(2+) is bound by residues Cys11, Cys14, Cys71, and Cys74. A C4-type zinc finger spans residues 11-74 (CPFCKRHTIH…LDLRFRCTVC (64 aa)).

Belongs to the eukaryotic ribosomal protein eL42 family. As to quaternary structure, part of the 50S ribosomal subunit. Requires Zn(2+) as cofactor.

Its function is as follows. Binds to the 23S rRNA. The protein is Large ribosomal subunit protein eL42 of Thermococcus kodakarensis (strain ATCC BAA-918 / JCM 12380 / KOD1) (Pyrococcus kodakaraensis (strain KOD1)).